A 127-amino-acid polypeptide reads, in one-letter code: Mitochondrial pyruvate carrier 2 (127 aa).

At 2 to 40 (SAAGARGLRATYHRLLDKVELMLPEKLRPLYNHPAGPRT) the chain is on the mitochondrial matrix side. Residues 41 to 61 (VFFWAPIMKRGLVCAGLADMA) traverse the membrane as a helical segment. The Mitochondrial intermembrane portion of the chain corresponds to 62–72 (RPAEKLSTAQS). The helical transmembrane segment at 73 to 90 (AVLMATGFIWSRYSLVII) threads the bilayer. The Mitochondrial matrix portion of the chain corresponds to 91 to 95 (PKNWS). Residues 96-115 (LFAVNFFVGAAGASQLFRIW) traverse the membrane as a helical segment. Residues 116-127 (RYNQELKAKAHK) are Mitochondrial intermembrane-facing.

The protein belongs to the mitochondrial pyruvate carrier (MPC) (TC 2.A.105) family. In terms of assembly, homodimer. Homooligomer. Forms heterodimers with MPC1 and MPC1L. The heterodimer is the more stable and dominant form.

It localises to the mitochondrion inner membrane. It carries out the reaction pyruvate(out) + H(+)(out) = pyruvate(in) + H(+)(in). Functionally, mediates the uptake of pyruvate into mitochondria. The sequence is that of Mitochondrial pyruvate carrier 2 (MPC2) from Pongo abelii (Sumatran orangutan).